Here is a 334-residue protein sequence, read N- to C-terminus: Glyceraldehyde-3-phosphate dehydrogenase B (334 aa).

Residues 12–13 (RI), Asp-34, and Ser-121 contribute to the NAD(+) site. Residues 149–151 (SCT), Thr-180, 209–210 (TG), and Arg-232 each bind D-glyceraldehyde 3-phosphate. The Nucleophile role is filled by Cys-150. Residue Asn-314 coordinates NAD(+).

It belongs to the glyceraldehyde-3-phosphate dehydrogenase family. Homotetramer.

It carries out the reaction D-glyceraldehyde 3-phosphate + phosphate + NAD(+) = (2R)-3-phospho-glyceroyl phosphate + NADH + H(+). It participates in carbohydrate degradation; glycolysis; pyruvate from D-glyceraldehyde 3-phosphate: step 1/5. Glyceraldehyde-3-phosphate dehydrogenase; part of the gene cluster that mediates the biosynthesis of heptelidic acid (HA), a sesquiterpene lactone that acts as an inhibitor of glyceraldehyde-3-phosphatedehydrogenase (GAPDH) and a growth inhibitor of the salt-tolerant lactic acid bacteria in soy sauce brewing. The GAPDPH hepG/gdpB shows much higher resistance to HA than the GAPDH gpdA located outside of the cluster, but it does not seem to act in self-resistance. This chain is Glyceraldehyde-3-phosphate dehydrogenase B, found in Aspergillus oryzae (strain ATCC 42149 / RIB 40) (Yellow koji mold).